Consider the following 322-residue polypeptide: Cyanophycinase (322 aa).

Catalysis depends on charge relay system residues serine 178, glutamate 196, and histidine 220.

This sequence belongs to the peptidase S51 family.

It catalyses the reaction [L-4-(L-arginin-2-N-yl)aspartate](n) + H2O = [L-4-(L-arginin-2-N-yl)aspartate](n-1) + L-4-(L-arginin-2-N-yl)aspartate. Exopeptidase that catalyzes the hydrolytic cleavage of multi-L-arginyl-poly-L-aspartic acid (cyanophycin; a water-insoluble reserve polymer) into aspartate-arginine dipeptides. This Synechococcus elongatus protein is Cyanophycinase (cphB).